A 129-amino-acid polypeptide reads, in one-letter code: uncharacterized protein (129 aa).

The protein belongs to the HesB/IscA family.

This is an uncharacterized protein from Buchnera aphidicola subsp. Schizaphis graminum (strain Sg).